Here is a 182-residue protein sequence, read N- to C-terminus: Nucleoside triphosphate/diphosphate phosphatase (182 aa).

Catalysis depends on Arg-27, which acts as the Proton donor. Mg(2+) contacts are provided by Asn-91, Asp-107, Asp-109, Asp-111, Asp-124, and Glu-127.

Belongs to the Ntdp family. The cofactor is Mg(2+).

The catalysed reaction is a ribonucleoside 5'-triphosphate + H2O = a ribonucleoside 5'-diphosphate + phosphate + H(+). It carries out the reaction a ribonucleoside 5'-diphosphate + H2O = a ribonucleoside 5'-phosphate + phosphate + H(+). Has nucleoside phosphatase activity towards nucleoside triphosphates and nucleoside diphosphates. This Lactiplantibacillus plantarum (strain ATCC BAA-793 / NCIMB 8826 / WCFS1) (Lactobacillus plantarum) protein is Nucleoside triphosphate/diphosphate phosphatase.